A 191-amino-acid polypeptide reads, in one-letter code: Pyridoxal 5'-phosphate synthase subunit PdxT (191 aa).

46–48 (GES) lines the L-glutamine pocket. Catalysis depends on C78, which acts as the Nucleophile. Residues R105 and 133–134 (IR) each bind L-glutamine. Active-site charge relay system residues include H169 and E171.

Belongs to the glutaminase PdxT/SNO family. In the presence of PdxS, forms a dodecamer of heterodimers. Only shows activity in the heterodimer.

The catalysed reaction is aldehydo-D-ribose 5-phosphate + D-glyceraldehyde 3-phosphate + L-glutamine = pyridoxal 5'-phosphate + L-glutamate + phosphate + 3 H2O + H(+). It catalyses the reaction L-glutamine + H2O = L-glutamate + NH4(+). It participates in cofactor biosynthesis; pyridoxal 5'-phosphate biosynthesis. Catalyzes the hydrolysis of glutamine to glutamate and ammonia as part of the biosynthesis of pyridoxal 5'-phosphate. The resulting ammonia molecule is channeled to the active site of PdxS. In Fervidobacterium nodosum (strain ATCC 35602 / DSM 5306 / Rt17-B1), this protein is Pyridoxal 5'-phosphate synthase subunit PdxT.